Here is a 173-residue protein sequence, read N- to C-terminus: ATP-dependent protease subunit HslV (173 aa).

The active site involves T2. Na(+)-binding residues include G158, D161, and S164.

Belongs to the peptidase T1B family. HslV subfamily. In terms of assembly, a double ring-shaped homohexamer of HslV is capped on each side by a ring-shaped HslU homohexamer. The assembly of the HslU/HslV complex is dependent on binding of ATP.

It localises to the cytoplasm. It catalyses the reaction ATP-dependent cleavage of peptide bonds with broad specificity.. Its activity is regulated as follows. Allosterically activated by HslU binding. In terms of biological role, protease subunit of a proteasome-like degradation complex believed to be a general protein degrading machinery. The sequence is that of ATP-dependent protease subunit HslV from Actinobacillus pleuropneumoniae serotype 5b (strain L20).